A 997-amino-acid chain; its full sequence is Kinesin-like protein KIF19 (997 aa).

One can recognise a Kinesin motor domain in the interval 11 to 346 (QLMVALRVRP…LTYAGRAKNI (336 aa)). Position 104–111 (104–111 (GPTGCGKT)) interacts with ATP. Residues 361–388 (IAQYTSIIADLRGEIQRLKCKIDQQAGR) adopt a coiled-coil conformation. Over residues 477 to 494 (EERRKESYTKEDSEKDSD) the composition is skewed to basic and acidic residues. Disordered stretches follow at residues 477–509 (EERR…EVAS), 665–704 (KITP…GTDS), 718–759 (QVKS…SSEN), and 784–997 (AAQR…LQHN). Residues 506 to 551 (EVASARENIAALVGEQKKLRKEKLALEQRCRELRARGRRLEETLPR) adopt a coiled-coil conformation. The segment covering 683 to 697 (KTLSSEAQRPQNNTL) has biased composition (polar residues). Low complexity predominate over residues 750-759 (INSSPESSEN). 2 stretches are compositionally biased toward polar residues: residues 835–851 (TLQH…STGE) and 950–959 (PNQNTGSGNP).

The protein belongs to the TRAFAC class myosin-kinesin ATPase superfamily. Kinesin family. In terms of tissue distribution, strongly expressed in the oviduct and trachea. Expressed in testis, lung, ovary and brain.

It is found in the cytoplasm. The protein resides in the cytoskeleton. The protein localises to the cell projection. Its subcellular location is the cilium. Functionally, plus end-directed microtubule-dependent motor protein that regulates the length of motile cilia by mediating depolymerization of microtubules at ciliary tips. The polypeptide is Kinesin-like protein KIF19 (Kif19) (Mus musculus (Mouse)).